The primary structure comprises 216 residues: Protein-L-isoaspartate O-methyltransferase 1 (216 aa).

Residue Ser-60 is part of the active site.

This sequence belongs to the methyltransferase superfamily. L-isoaspartyl/D-aspartyl protein methyltransferase family.

The protein resides in the cytoplasm. It catalyses the reaction [protein]-L-isoaspartate + S-adenosyl-L-methionine = [protein]-L-isoaspartate alpha-methyl ester + S-adenosyl-L-homocysteine. Catalyzes the methyl esterification of L-isoaspartyl residues in peptides and proteins that result from spontaneous decomposition of normal L-aspartyl and L-asparaginyl residues. It plays a role in the repair and/or degradation of damaged proteins. This is Protein-L-isoaspartate O-methyltransferase 1 (pcm1) from Archaeoglobus fulgidus (strain ATCC 49558 / DSM 4304 / JCM 9628 / NBRC 100126 / VC-16).